A 571-amino-acid chain; its full sequence is CDT1-like protein a, chloroplastic (571 aa).

The N-terminal 79 residues, 1–79 (MSTPGSSRSI…GSRRRSEDPV (79 aa)), are a transit peptide targeting the chloroplast. 2 disordered regions span residues 1–110 (MSTP…EKEK) and 288–315 (TTSS…TPAK). Over residues 22 to 38 (SPSSKSQTGNPNPSSVA) the composition is skewed to polar residues. Residues 81–96 (SSAKSRLFFDSSSSSP) show a composition bias toward low complexity. The segment covering 288 to 302 (TTSSLAKPTSSQINI) has biased composition (polar residues). Positions 303–315 (APTPTKPTSTPAK) are enriched in low complexity.

Belongs to the Cdt1 family. Binds to ARC6. Post-translationally, phosphorylated by cyclin D- and cyclin A-containing CDKA-1, and thus targeted to proteasome-mediated proteolysis. In terms of tissue distribution, expressed in proliferating (e.g. shoot and root apical meristems, organ primordia) and endoreplicating cells (e.g. guard cells and stomatal lineage, developing trichomes).

It is found in the plastid. It localises to the chloroplast. In terms of biological role, member of the pre-replication complex. Component of the plastid division machinery. Promotes polyloidization and regulates endoreduplication. Involved in the coordination of cell and plastid division. This Arabidopsis thaliana (Mouse-ear cress) protein is CDT1-like protein a, chloroplastic (CDT1A).